The primary structure comprises 145 residues: Ribosome-binding factor A (145 aa).

Basic and acidic residues predominate over residues 122 to 132 (KVQRDLESAPR). The disordered stretch occupies residues 122–145 (KVQRDLESAPREDDEGEPASSSRD).

This sequence belongs to the RbfA family. As to quaternary structure, monomer. Binds 30S ribosomal subunits, but not 50S ribosomal subunits or 70S ribosomes.

Its subcellular location is the cytoplasm. In terms of biological role, one of several proteins that assist in the late maturation steps of the functional core of the 30S ribosomal subunit. Associates with free 30S ribosomal subunits (but not with 30S subunits that are part of 70S ribosomes or polysomes). Required for efficient processing of 16S rRNA. May interact with the 5'-terminal helix region of 16S rRNA. The sequence is that of Ribosome-binding factor A from Methylorubrum extorquens (strain CM4 / NCIMB 13688) (Methylobacterium extorquens).